The sequence spans 103 residues: Large ribosomal subunit protein bL21 (103 aa).

This sequence belongs to the bacterial ribosomal protein bL21 family. In terms of assembly, part of the 50S ribosomal subunit. Contacts protein L20.

This protein binds to 23S rRNA in the presence of protein L20. The protein is Large ribosomal subunit protein bL21 of Cupriavidus necator (strain ATCC 17699 / DSM 428 / KCTC 22496 / NCIMB 10442 / H16 / Stanier 337) (Ralstonia eutropha).